We begin with the raw amino-acid sequence, 501 residues long: Lysine--tRNA ligase (501 aa).

Residues glutamate 402 and glutamate 409 each contribute to the Mg(2+) site.

The protein belongs to the class-II aminoacyl-tRNA synthetase family. As to quaternary structure, homodimer. It depends on Mg(2+) as a cofactor.

The protein resides in the cytoplasm. It carries out the reaction tRNA(Lys) + L-lysine + ATP = L-lysyl-tRNA(Lys) + AMP + diphosphate. This is Lysine--tRNA ligase from Helicobacter pylori (strain Shi470).